The primary structure comprises 439 residues: Ribosomal protein uS12 methylthiotransferase RimO (439 aa).

Residues 2–114 (SKLYLMSLGC…IDEMILKKTN (113 aa)) form the MTTase N-terminal domain. Residues Cys11, Cys45, Cys77, Cys146, Cys150, and Cys153 each coordinate [4Fe-4S] cluster. A Radical SAM core domain is found at 132–363 (TGSNSHAFIK…VDEVIEKSFE (232 aa)).

The protein belongs to the methylthiotransferase family. RimO subfamily. [4Fe-4S] cluster is required as a cofactor.

The protein resides in the cytoplasm. It carries out the reaction L-aspartate(89)-[ribosomal protein uS12]-hydrogen + (sulfur carrier)-SH + AH2 + 2 S-adenosyl-L-methionine = 3-methylsulfanyl-L-aspartate(89)-[ribosomal protein uS12]-hydrogen + (sulfur carrier)-H + 5'-deoxyadenosine + L-methionine + A + S-adenosyl-L-homocysteine + 2 H(+). In terms of biological role, catalyzes the methylthiolation of an aspartic acid residue of ribosomal protein uS12. The chain is Ribosomal protein uS12 methylthiotransferase RimO from Campylobacter jejuni subsp. jejuni serotype O:2 (strain ATCC 700819 / NCTC 11168).